Here is a 729-residue protein sequence, read N- to C-terminus: Transketolase (729 aa).

H97 is a substrate binding site. Thiamine diphosphate is bound by residues H138 and G186–L188. D227 is a Mg(2+) binding site. Thiamine diphosphate contacts are provided by G228 and N257. Mg(2+) contacts are provided by N257 and I259. H332, R423, and S450 together coordinate substrate. H332 lines the thiamine diphosphate pocket. Catalysis depends on E477, which acts as the Proton donor. F503 is a thiamine diphosphate binding site. H527, D535, and R586 together coordinate substrate.

It belongs to the transketolase family. Homodimer. Mg(2+) is required as a cofactor. Requires Ca(2+) as cofactor. Mn(2+) serves as cofactor. It depends on Co(2+) as a cofactor. The cofactor is thiamine diphosphate.

It catalyses the reaction D-sedoheptulose 7-phosphate + D-glyceraldehyde 3-phosphate = aldehydo-D-ribose 5-phosphate + D-xylulose 5-phosphate. Its function is as follows. Catalyzes the transfer of a two-carbon ketol group from a ketose donor to an aldose acceptor, via a covalent intermediate with the cofactor thiamine pyrophosphate. This Streptococcus pyogenes serotype M18 (strain MGAS8232) protein is Transketolase (tkt).